The primary structure comprises 235 residues: 2-C-methyl-D-erythritol 4-phosphate cytidylyltransferase (235 aa).

Belongs to the IspD/TarI cytidylyltransferase family. IspD subfamily.

It catalyses the reaction 2-C-methyl-D-erythritol 4-phosphate + CTP + H(+) = 4-CDP-2-C-methyl-D-erythritol + diphosphate. The protein operates within isoprenoid biosynthesis; isopentenyl diphosphate biosynthesis via DXP pathway; isopentenyl diphosphate from 1-deoxy-D-xylulose 5-phosphate: step 2/6. Catalyzes the formation of 4-diphosphocytidyl-2-C-methyl-D-erythritol from CTP and 2-C-methyl-D-erythritol 4-phosphate (MEP). The sequence is that of 2-C-methyl-D-erythritol 4-phosphate cytidylyltransferase from Pseudomonas entomophila (strain L48).